Consider the following 425-residue polypeptide: uncharacterized protein (425 aa).

One can recognise a TRAM domain in the interval 1 to 57; that stretch reads MKDKPLKLTVEKLVYGGYGFSRLNGKAVFVRFASPKELVEAKVVKEKKDYTEAVVTK. Residues Cys70, Cys76, Cys79, and Cys153 each coordinate [4Fe-4S] cluster. S-adenosyl-L-methionine-binding residues include Gln260, Asp308, and Asp354. Residue Cys381 is the Nucleophile of the active site.

This sequence belongs to the class I-like SAM-binding methyltransferase superfamily. RNA M5U methyltransferase family.

This is an uncharacterized protein from Aquifex aeolicus (strain VF5).